The primary structure comprises 83 residues: MSSGGLLLLLGLLTLWAELTPVSSKDLPEICKLPKEPGPCRSYLLYFYYNSVEHKCQTFHYGGCEGNENRFHTIEECKSTCAE.

The signal sequence occupies residues 1–24 (MSSGGLLLLLGLLTLWAELTPVSS). Residues 31 to 81 (CKLPKEPGPCRSYLLYFYYNSVEHKCQTFHYGGCEGNENRFHTIEECKSTC) form the BPTI/Kunitz inhibitor domain. Disulfide bonds link C31-C81, C40-C64, and C56-C77.

This sequence belongs to the venom Kunitz-type family. In terms of tissue distribution, expressed by the venom gland.

The protein resides in the secreted. Functionally, serine protease inhibitor. The protein is Kunitz-type serine protease inhibitor vestiginin-3 of Demansia vestigiata (Lesser black whip snake).